Reading from the N-terminus, the 428-residue chain is CRISPR system endoribonuclease Csm6 (428 aa).

The CARF domain stretch occupies residues 1–145 (MKILISAVGT…RANREYTALT (145 aa)). The HEPN domain stretch occupies residues 146–428 (ESEIDALIME…QNKELIKMLE (283 aa)).

The protein belongs to the CRISPR-associated Csm6 family. In terms of assembly, homodimer. The composite ssRNase active site is formed at the dimer interface.

Its activity is regulated as follows. Non-specific ssRNase activity is allosterically activated about 1000-fold by cyclic hexaadenylate (cA6), a second messenger produced by Cas10 of the ternary Csm effector complex in the presence of a cognate target RNA. ssRNase activity is inhibited by physiological concentrations of ATP (1 mM), activity is restored by cOA. Functionally, CRISPR (clustered regularly interspaced short palindromic repeat) is an adaptive immune system that provides protection against mobile genetic elements (viruses, transposable elements and conjugative plasmids). CRISPR clusters contain spacers, sequences complementary to antecedent mobile elements, and target invading nucleic acids. CRISPR clusters are transcribed and processed into CRISPR RNA (crRNA). The type III-A Csm complex binds crRNA and acts as a crRNA-guided RNase, DNase and cyclic oligoadenylate synthase; binding of target RNA cognate to the crRNA is required for all activities. In a heterologous host this Csm effector complex restricts ssRNA phage MS2, suggesting it may target RNA viruses in vivo. This protein is not part of the Csm complex. In terms of biological role, csm functions as a non-specific ssDNase. Base-pairing between crRNA and target RNA to form a ternary Csm complex activates a ssDNase activity; target RNA cleavage suppresses the ssDNase, a temporal control that prevents uncontrolled DNA degradation. Viral RNA transcripts probably tether the Csm complex to the viral genome, recruiting Cas10 ssDNA activity which is able to degrade DNA in the transcription bubble, spatially controlling the DNase activity. A single-strand-specific endoribonuclease (ssRNase) that is approximately 1000-fold stimulated by cyclic oligoadenylate (cOA); although several species of cOA are synthesized by this organism only cyclic hexaadenylate (cA6) stimulates the ssRNase activity. Cleaves preferentially within GA or AA dinucleotides, although the presence of cA6 broadens the preference. Linear oligoadenylates do not activate the RNase. The chain is CRISPR system endoribonuclease Csm6 from Streptococcus thermophilus.